The primary structure comprises 348 residues: Phosphoribosylformylglycinamidine cyclo-ligase (348 aa).

It belongs to the AIR synthase family.

Its subcellular location is the cytoplasm. It catalyses the reaction 2-formamido-N(1)-(5-O-phospho-beta-D-ribosyl)acetamidine + ATP = 5-amino-1-(5-phospho-beta-D-ribosyl)imidazole + ADP + phosphate + H(+). The protein operates within purine metabolism; IMP biosynthesis via de novo pathway; 5-amino-1-(5-phospho-D-ribosyl)imidazole from N(2)-formyl-N(1)-(5-phospho-D-ribosyl)glycinamide: step 2/2. The chain is Phosphoribosylformylglycinamidine cyclo-ligase from Aromatoleum aromaticum (strain DSM 19018 / LMG 30748 / EbN1) (Azoarcus sp. (strain EbN1)).